The following is a 185-amino-acid chain: Ribosome-recycling factor (185 aa).

It belongs to the RRF family.

It localises to the cytoplasm. Responsible for the release of ribosomes from messenger RNA at the termination of protein biosynthesis. May increase the efficiency of translation by recycling ribosomes from one round of translation to another. The protein is Ribosome-recycling factor of Streptococcus pneumoniae serotype 19F (strain G54).